A 536-amino-acid chain; its full sequence is Caspase recruitment domain-containing protein 9 (536 aa).

S2 carries the post-translational modification Phosphoserine. The Zn(2+) site is built by D3, C10, and H73. Residues 6–98 (NDDECWSVLE…QLYKKVTGKE (93 aa)) enclose the CARD domain. Residues 99 to 116 (PARVFSMIIDASGESGLT) form a linker region. Coiled coils occupy residues 117 to 277 (QLLM…DRSS) and 332 to 419 (LRKD…QQLE). Residue K125 forms a Glycyl lysine isopeptide (Lys-Gly) (interchain with G-Cter in ubiquitin) linkage. T231 carries the post-translational modification Phosphothreonine. S277 is modified (phosphoserine). Phosphoserine is present on residues S424, S425, S431, S450, S460, S483, and S498. Residues 427–536 (LEDGSPRRSQ…GSDNTDTEGS (110 aa)) form a disordered region. Positions 487-502 (PPEKERRRLKESFENY) are enriched in basic and acidic residues. A compositionally biased stretch (basic residues) spans 503-513 (RRKRALRKMQK). 2 positions are modified to phosphothreonine; by CK2: T531 and T533.

As to quaternary structure, monomer. Homodimer; homodimerization is mediated by the CARD domain which forms an extensive interaction with the adjacent linker and coiled-coil regions; leads to an autoinhibited state. Homomultimer; polymerizes following activation, forming a nucleating helical template that seeds BCL10-filament formation via a CARD-CARD interaction. Interacts (via CARD domain) with BCL10 (via CARD domain); interaction takes place following CARD9 activation and polymerization, leading to the formation of a filamentous CBM complex assembly. Component of a CBM complex (CARD9-BCL10, MALT1), composed of CARD9, BCL10 and MALT1. Interacts with RASGRF1. Interacts with NOD2 (via NACHT domain); interaction is direct. Interacts with RIPK2. Interacts with VHL; without leading to protein degradation. Phosphorylated at Thr-231 by PRKCD downstream of C-type lectin receptors activation: phosphorylation promotes interaction with BCL10, followed by activation of NF-kappa-B and MAP kinase p38 pathways. Phosphorylated at Thr-531 and Thr-533 by CK2 following interaction with VHL, leading to inhibit the ability to activate NF-kappa-B. Post-translationally, ubiquitinated at Lys-125 via 'Lys-27'-linked ubiquitin by TRIM62 downstream of C-type lectin receptors activation; leading to CARD9 activation, followed by activation of NF-kappa-B and MAP kinase p38 pathways. Deubiquitinated at Lys-125 by USP15, inhibiting CARD9. In terms of tissue distribution, expression is restricted to several populations of phagocytes, such as macrophages, monocytes, and dendritic cells. Highly expressed in spleen. Also detected in liver, placenta, lung, peripheral blood leukocytes and in brain.

Its subcellular location is the cytoplasm. With respect to regulation, maintained in an autoinhibited state via homodimerization in which the CARD domain forms an extensive interaction with the adjacent linker and coiled-coil regions. Activation downstream of C-type lectin receptors, by phosphorylation by PRKCD and/or ubiquitination by TRIM62, triggers disruption of the CARD domain-coiled coil interface, CARD9 homooligomerization and BCL10 recruitment, followed by activation of NF-kappa-B and MAP kinase p38 pathways. Zinc-binding inhibits activation by stabilizing the CARD ground-state conformation and restricting its capacity to form BCL10-nucleating filaments. Adapter protein that plays a key role in innate immune response against fungi by forming signaling complexes downstream of C-type lectin receptors. CARD9-mediated signals are essential for antifungal immunity against a subset of fungi from the phylum Ascomycota. Transduces signals in myeloid cells downstream of C-type lectin receptors CLEC7A (dectin-1), CLEC6A (dectin-2) and CLEC4E (Mincle), which detect pathogen-associated molecular pattern metabolites (PAMPs), such as fungal carbohydrates, and trigger CARD9 activation. Upon activation, CARD9 homooligomerizes to form a nucleating helical template that recruits BCL10 via CARD-CARD interaction, thereby promoting polymerization of BCL10 and subsequent recruitment of MALT1: this leads to activation of NF-kappa-B and MAP kinase p38 (MAPK11, MAPK12, MAPK13 and/or MAPK14) pathways which stimulate expression of genes encoding pro-inflammatory cytokines and chemokines. CARD9 signaling in antigen-presenting cells links innate sensing of fungi to the activation of adaptive immunity and provides a cytokine milieu that induces the development and subsequent of interleukin 17-producing T helper (Th17) cells. Also involved in activation of myeloid cells via classical ITAM-associated receptors and TLR: required for TLR-mediated activation of MAPK, while it is not required for TLR-induced activation of NF-kappa-B. CARD9 can also be engaged independently of BCL10: forms a complex with RASGRF1 downstream of C-type lectin receptors, which recruits and activates HRAS, leading to ERK activation and the production of cytokines. Acts as an important regulator of the intestinal commensal fungi (mycobiota) component of the gut microbiota. Plays an essential role in antifungal immunity against dissemination of gut fungi: acts by promoting induction of antifungal IgG antibodies response in CX3CR1(+) macrophages to confer protection against disseminated C.albicans or C.auris infection. Also mediates immunity against other pathogens, such as certain bacteria, viruses and parasites; CARD9 signaling is however redundant with other innate immune responses. In response to L.monocytogenes infection, required for the production of inflammatory cytokines activated by intracellular peptidoglycan: acts by connecting NOD2 recognition of peptidoglycan to downstream activation of MAP kinases (MAPK) without activating NF-kappa-B. This Homo sapiens (Human) protein is Caspase recruitment domain-containing protein 9.